We begin with the raw amino-acid sequence, 2761 residues long: Serine/threonine-protein kinase TEL1 (2761 aa).

The region spanning 1692–2294 (PVIPIMLSLG…LYPLISMSLQ (603 aa)) is the FAT domain. One can recognise a PI3K/PI4K catalytic domain in the interval 2404 to 2710 (DPKVLISSSG…DFSELLEEDN (307 aa)). Residues 2410 to 2416 (SSSGLSL) form a G-loop region. The interval 2579–2587 (GLGDRHLNN) is catalytic loop. The segment at 2599 to 2623 (HIDLGVAFDQGKLLPIPELVPFRLT) is activation loop. An FATC domain is found at 2729 to 2761 (DGLSVEAIVQELLSSATDKQNLATIYMGWSPFY).

Belongs to the PI3/PI4-kinase family. ATM subfamily. Associates with DNA double-strand breaks.

Its subcellular location is the nucleus. It localises to the chromosome. The protein localises to the telomere. The catalysed reaction is L-seryl-[protein] + ATP = O-phospho-L-seryl-[protein] + ADP + H(+). It catalyses the reaction L-threonyl-[protein] + ATP = O-phospho-L-threonyl-[protein] + ADP + H(+). Functionally, serine/threonine protein kinase which activates checkpoint signaling upon genotoxic stresses such as ionizing radiation (IR), ultraviolet light (UV), or DNA replication stalling, thereby acting as a DNA damage sensor. Recognizes the substrate consensus sequence [ST]-Q. Phosphorylates histone H2A to form H2AS128ph (gamma-H2A) at sites of DNA damage, involved in the regulation of DNA damage response mechanism. Required for the control of telomere length and genome stability. This chain is Serine/threonine-protein kinase TEL1 (TEL1), found in Kluyveromyces lactis (strain ATCC 8585 / CBS 2359 / DSM 70799 / NBRC 1267 / NRRL Y-1140 / WM37) (Yeast).